Reading from the N-terminus, the 212-residue chain is Large ribosomal subunit protein uL3 (212 aa).

Gln-153 carries the N5-methylglutamine modification.

The protein belongs to the universal ribosomal protein uL3 family. Part of the 50S ribosomal subunit. Forms a cluster with proteins L14 and L19. Methylated by PrmB.

In terms of biological role, one of the primary rRNA binding proteins, it binds directly near the 3'-end of the 23S rRNA, where it nucleates assembly of the 50S subunit. The sequence is that of Large ribosomal subunit protein uL3 from Shewanella pealeana (strain ATCC 700345 / ANG-SQ1).